A 54-amino-acid polypeptide reads, in one-letter code: Large ribosomal subunit protein bL33B (54 aa).

It belongs to the bacterial ribosomal protein bL33 family.

This is Large ribosomal subunit protein bL33B from Mycobacterium sp. (strain KMS).